We begin with the raw amino-acid sequence, 529 residues long: Variant surface glycoprotein MITAT 1.6 (529 aa).

Residues 1–24 (MAVHRALAAYAISLYVLLPRKSGA) form the signal peptide. 2 disulfide bridges follow: Cys-39-Cys-170 and Cys-147-Cys-214. The N-linked (GlcNAc...) (high mannose) asparagine glycan is linked to Asn-456. A lipid anchor (GPI-anchor amidated aspartate) is attached at Asp-506. A propeptide spans 507 to 529 (SSILVTKKFALTVVSAAFVALLF) (removed in mature form).

Post-translationally, N-glycosylated; glycan is composed of 6 to 9 mannose residues.

It localises to the cell membrane. Functionally, VSG forms a coat on the surface of the parasite. The trypanosome evades the immune response of the host by expressing a series of antigenically distinct VSGs from an estimated 1000 VSG genes. This is Variant surface glycoprotein MITAT 1.6 from Trypanosoma brucei brucei.